The chain runs to 195 residues: Biogenesis of lysosome-related organelles complex 1 subunit 3 (195 aa).

Basic residues predominate over residues 1 to 11; the sequence is MESSQGRRRRP. Residues 1-72 form a disordered region; sequence MESSQGRRRR…PEPEPTVVPV (72 aa). Positions 25–51 are enriched in low complexity; the sequence is ELSASSSEEELYLGPSGPTRGRPTGLR. Phosphothreonine is present on Thr59. Ser61 carries the post-translational modification Phosphoserine.

This sequence belongs to the BLOC1S3 family. As to quaternary structure, octamer composed of one copy each BLOC1S1, BLOC1S2, BLOC1S3, BLOC1S4, BLOC1S5, BLOC1S6, DTNBP1/BLOC1S7 and SNAPIN/BLOC1S8. Interacts directly with BLOC1S2. Component of the biogenesis of lysosome-related organelles complex 1 (BLOC-1) composed of BLOC1S1, BLOC1S2, BLOC1S3, BLOC1S4, BLOC1S5, BLOC1S6, DTNBP1/BLOC1S7 and SNAPIN/BLOC1S8. The BLOC-1 complex associates with the AP-3 protein complex and membrane protein cargos. Interacts with BLOC1S4, BLOC1S5 and BLOC1S6. Post-translationally, phosphorylated. In terms of tissue distribution, ubiquitously expressed.

It localises to the cytoplasm. Its function is as follows. Component of the BLOC-1 complex, a complex that is required for normal biogenesis of lysosome-related organelles (LRO), such as platelet dense granules and melanosomes. In concert with the AP-3 complex, the BLOC-1 complex is required to target membrane protein cargos into vesicles assembled at cell bodies for delivery into neurites and nerve terminals. The BLOC-1 complex, in association with SNARE proteins, is also proposed to be involved in neurite extension. Plays a role in intracellular vesicle trafficking. In Mus musculus (Mouse), this protein is Biogenesis of lysosome-related organelles complex 1 subunit 3 (Bloc1s3).